The chain runs to 284 residues: Two-pore potassium channel 4 (284 aa).

Positions 1-21 (MEEENLLNENLLHPNESSPEE) are disordered. Residues 1–31 (MEEENLLNENLLHPNESSPEETQVTTVSKSK) lie on the Cytoplasmic side of the membrane. The chain crosses the membrane as a helical span at residues 32–52 (WTILVLAMILLLVYLTFGVCT). The segment at residues 70-89 (DAFYFSIVTFSTVGYGDIVP) is an intramembrane region (pore-forming). The helical transmembrane segment at 93-113 (TTKILTIVLVSTGVVFLDYLL) threads the bilayer. Residues 114 to 156 (NRVVSHVLSLQENAILDRINKTRNRAIRDHIAEDGKIRLKWKL) lie on the Cytoplasmic side of the membrane. The helical transmembrane segment at 157–177 (CLAFCAVGLCVGSGALFLHVF) threads the bilayer. Residues 184 to 203 (DSVYLSVISVTTVGYGDKTF) constitute an intramembrane region (pore-forming). A helical membrane pass occupies residues 211 to 231 (FAVFWLLLSTIAMATLFLYLA). Residues 232 to 284 (EMRIDRTTVMKLPPSESEFIVFKLRESGRISEDDIKQIVREFENLEEVPSSGS) lie on the Cytoplasmic side of the membrane.

It belongs to the two pore domain potassium channel (TC 1.A.1.7) family. In terms of assembly, homodimer. In terms of tissue distribution, predominantly expressed in pollen.

It is found in the cell membrane. Its function is as follows. Voltage-independent, instantaneously activating, potassium-selective plasma membrane ion channel. Open rectifier. Regulated by cytoplasmic pH and extra-cellular calcium. Has some permeability for Rb(+) and NH(4)(+), but none for Na(+) or Li(+). The sequence is that of Two-pore potassium channel 4 (TPK4) from Arabidopsis thaliana (Mouse-ear cress).